We begin with the raw amino-acid sequence, 195 residues long: Transcriptional regulator LdrP (195 aa).

The HTH crp-type domain maps to 110–182 (GELRARIARY…YRRVYLLDLA (73 aa)). Residues 142-161 (HEEIADATASIRESVSKVLA) constitute a DNA-binding region (H-T-H motif).

Its function is as follows. Activates transcription. Positively regulates PcrtB promoter upstream of the crtB operon in a cAMP-independent manner. Regulated genes include genes encoding DNA photolyase, phytoene synthase and cytochrome P450 monooxygenase, which are involved in carotenoid biosynthesis. Positively regulates the light-inducible gene cluster in the megaplasmid in a cAMP-independent manner. This is Transcriptional regulator LdrP from Thermus thermophilus (strain ATCC BAA-163 / DSM 7039 / HB27).